Consider the following 187-residue polypeptide: Decorin-binding protein B (187 aa).

The first 20 residues, 1–20 (MKIGKLNSIVIALFFKLLVA), serve as a signal peptide directing secretion.

Belongs to the decorin-binding protein family.

Its function is as follows. Binds to decorin which may mediate the adherence of B.burgdorferi to collagen fibers in skin and other tissues. The polypeptide is Decorin-binding protein B (dbpB) (Borreliella burgdorferi (strain ATCC 35210 / DSM 4680 / CIP 102532 / B31) (Borrelia burgdorferi)).